The primary structure comprises 207 residues: MEFMEIFKKWAPEYDATVNGENEEYRDVFINYSEMLNELASTAEGRVLEIGAGTGNLTLMLKDKGREVSAIDPSDDMRAIANETKNLDVQYGHFFDIPFDQPFDYIVTSFAFHHVKPEEKSDAIKTMMHSLTDDGKLLILDTMFESEKYKQDLIKYYNNQEFYNLTEDLQTEYYTYIENLKDIVNDLGLNLDMVQKNKFAWLATISK.

S-adenosyl-L-methionine contacts are provided by glycine 51 and aspartate 72.

It belongs to the methyltransferase superfamily. YrrT family.

Could be a S-adenosyl-L-methionine-dependent methyltransferase. This is an uncharacterized protein from Staphylococcus carnosus (strain TM300).